The primary structure comprises 729 residues: Polyribonucleotide nucleotidyltransferase (729 aa).

The disordered stretch occupies residues 399–419; the sequence is YMHNYNFPPYSTGETGRVGSP. Residues Asp-509 and Asp-515 each contribute to the Mg(2+) site. The KH domain maps to 575 to 634; sequence PRVISVKIPVDKIGEVIGPKGKMINQIQADSGAEITVEDDGTIYIGAADGPAAETARSAI. Residues 646-718 enclose the S1 motif domain; the sequence is GERYLGTIVK…ARGKISLAPG (73 aa).

Belongs to the polyribonucleotide nucleotidyltransferase family. Mg(2+) is required as a cofactor.

It is found in the cytoplasm. It catalyses the reaction RNA(n+1) + phosphate = RNA(n) + a ribonucleoside 5'-diphosphate. Functionally, involved in mRNA degradation. Catalyzes the phosphorolysis of single-stranded polyribonucleotides processively in the 3'- to 5'-direction. This Parafrankia sp. (strain EAN1pec) protein is Polyribonucleotide nucleotidyltransferase.